A 113-amino-acid polypeptide reads, in one-letter code: U11-theraphotoxin-Hhn1a (113 aa).

An N-terminal signal peptide occupies residues 1 to 21; that stretch reads MNTVRVTFLLVFVLAVSLGQA. Positions 22–74 are excised as a propeptide; that stretch reads DKDENRMEMQKKTEQGKSYLDFAENLLLQKLEELEAKLLEEDSEESRNSRQKR. 3 disulfides stabilise this stretch: Cys75–Cys90, Cys82–Cys95, and Cys89–Cys110.

Belongs to the neurotoxin 14 (magi-1) family. 01 (HNTX-16) subfamily. Expressed by the venom gland.

The protein localises to the secreted. Functionally, probable ion channel inhibitor. The polypeptide is U11-theraphotoxin-Hhn1a (Cyriopagopus hainanus (Chinese bird spider)).